Reading from the N-terminus, the 264-residue chain is Tryptophan synthase alpha chain (264 aa).

Active-site proton acceptor residues include glutamate 49 and aspartate 60.

This sequence belongs to the TrpA family. Tetramer of two alpha and two beta chains.

It carries out the reaction (1S,2R)-1-C-(indol-3-yl)glycerol 3-phosphate + L-serine = D-glyceraldehyde 3-phosphate + L-tryptophan + H2O. It participates in amino-acid biosynthesis; L-tryptophan biosynthesis; L-tryptophan from chorismate: step 5/5. Its function is as follows. The alpha subunit is responsible for the aldol cleavage of indoleglycerol phosphate to indole and glyceraldehyde 3-phosphate. In Lachnospira eligens (strain ATCC 27750 / DSM 3376 / VPI C15-48 / C15-B4) (Eubacterium eligens), this protein is Tryptophan synthase alpha chain.